Here is a 244-residue protein sequence, read N- to C-terminus: 3-oxoacyl-[acyl-carrier-protein] reductase FabG (244 aa).

Residues 12–15 (GANQ) and T37 each bind NADP(+). Residues K50 and G53 each coordinate Ca(2+). NADP(+) is bound by residues 59–60 (DL) and N86. S138 serves as a coordination point for substrate. N145 provides a ligand contact to Ca(2+). The active-site Proton acceptor is the Y151. Residues 151–155 (YSASK) and I184 each bind NADP(+). Ca(2+) contacts are provided by Q233 and T234.

Belongs to the short-chain dehydrogenases/reductases (SDR) family. Homotetramer.

The enzyme catalyses a (3R)-hydroxyacyl-[ACP] + NADP(+) = a 3-oxoacyl-[ACP] + NADPH + H(+). The protein operates within lipid metabolism; fatty acid biosynthesis. Functionally, catalyzes the NADPH-dependent reduction of beta-ketoacyl-ACP substrates to beta-hydroxyacyl-ACP products, the first reductive step in the elongation cycle of fatty acid biosynthesis. The protein is 3-oxoacyl-[acyl-carrier-protein] reductase FabG (fabG) of Buchnera aphidicola subsp. Schizaphis graminum (strain Sg).